We begin with the raw amino-acid sequence, 77 residues long: U8-lycotoxin-Ls1b (77 aa).

Residues 1 to 20 (MKLIIFTGLVLFAIVSLIEA) form the signal peptide. Residues 21-26 (QAENEK) constitute a propeptide that is removed on maturation.

The protein belongs to the neurotoxin 19 (CSTX) family. 08 (U8-Lctx) subfamily. Post-translationally, contains 4 disulfide bonds. As to expression, expressed by the venom gland.

The protein resides in the secreted. The sequence is that of U8-lycotoxin-Ls1b from Lycosa singoriensis (Wolf spider).